Here is a 130-residue protein sequence, read N- to C-terminus: Small ribosomal subunit protein uS11 (130 aa).

It belongs to the universal ribosomal protein uS11 family. As to quaternary structure, part of the 30S ribosomal subunit. Interacts with proteins S7 and S18. Binds to IF-3.

In terms of biological role, located on the platform of the 30S subunit, it bridges several disparate RNA helices of the 16S rRNA. Forms part of the Shine-Dalgarno cleft in the 70S ribosome. This Prochlorococcus marinus (strain MIT 9515) protein is Small ribosomal subunit protein uS11.